The chain runs to 308 residues: Cytochrome b (308 aa).

A run of 4 helical transmembrane segments spans residues 1-21, 45-66, 81-101, and 146-166; these read FGSLLGICLMTQIITGLLMAM, WLIRNLHANGASMFFICIYLHI, WNTGVILLLTLMATAFVGYVL, and FFALHFLLPFMIAGLTFIHLT. 2 residues coordinate heme b: His-51 and His-65. Residues His-150 and His-164 each contribute to the heme b site. His-169 is a binding site for a ubiquinone. The next 3 helical transmembrane spans lie at 194 to 214, 256 to 276, and 288 to 308; these read TKDILGFLAMLVPLTALAMFS, LGGVLALAASVLILFLIPFLH, and LSQLLFWILVTNLLILTWVGS.

Belongs to the cytochrome b family. The cytochrome bc1 complex contains 11 subunits: 3 respiratory subunits (MT-CYB, CYC1 and UQCRFS1), 2 core proteins (UQCRC1 and UQCRC2) and 6 low-molecular weight proteins (UQCRH/QCR6, UQCRB/QCR7, UQCRQ/QCR8, UQCR10/QCR9, UQCR11/QCR10 and a cleavage product of UQCRFS1). This cytochrome bc1 complex then forms a dimer. Heme b is required as a cofactor.

The protein localises to the mitochondrion inner membrane. In terms of biological role, component of the ubiquinol-cytochrome c reductase complex (complex III or cytochrome b-c1 complex) that is part of the mitochondrial respiratory chain. The b-c1 complex mediates electron transfer from ubiquinol to cytochrome c. Contributes to the generation of a proton gradient across the mitochondrial membrane that is then used for ATP synthesis. The protein is Cytochrome b (MT-CYB) of Asthenes dorbignyi (Creamy-breasted canastero).